Reading from the N-terminus, the 121-residue chain is Large ribosomal subunit protein uL14c (121 aa).

Belongs to the universal ribosomal protein uL14 family. As to quaternary structure, part of the 50S ribosomal subunit.

It is found in the plastid. The protein localises to the chloroplast. Functionally, binds to 23S rRNA. In Pelargonium hortorum (Common geranium), this protein is Large ribosomal subunit protein uL14c.